The chain runs to 417 residues: D-amino acid dehydrogenase (417 aa).

3 to 17 (IVVLGGGVVGVTSAW) serves as a coordination point for FAD.

It belongs to the DadA oxidoreductase family. FAD serves as cofactor.

It catalyses the reaction a D-alpha-amino acid + A + H2O = a 2-oxocarboxylate + AH2 + NH4(+). Its pathway is amino-acid degradation; D-alanine degradation; NH(3) and pyruvate from D-alanine: step 1/1. In terms of biological role, oxidative deamination of D-amino acids. This chain is D-amino acid dehydrogenase, found in Aeromonas salmonicida (strain A449).